We begin with the raw amino-acid sequence, 446 residues long: Exodeoxyribonuclease 7 large subunit (446 aa).

This sequence belongs to the XseA family. As to quaternary structure, heterooligomer composed of large and small subunits.

It localises to the cytoplasm. The catalysed reaction is Exonucleolytic cleavage in either 5'- to 3'- or 3'- to 5'-direction to yield nucleoside 5'-phosphates.. Its function is as follows. Bidirectionally degrades single-stranded DNA into large acid-insoluble oligonucleotides, which are then degraded further into small acid-soluble oligonucleotides. The protein is Exodeoxyribonuclease 7 large subunit of Streptococcus pneumoniae (strain Taiwan19F-14).